A 327-amino-acid polypeptide reads, in one-letter code: Protein-L-isoaspartate O-methyltransferase (327 aa).

Disordered stretches follow at residues 1–38 and 62–105; these read MSGE…DAAR and PRAA…KSAT. A compositionally biased stretch (basic and acidic residues) spans 14–29; that stretch reads EDLKREPRKPEGRAAE. A compositionally biased stretch (low complexity) spans 62–77; that stretch reads PRAAGASGSGVPVAKP. The span at 92 to 105 shows a compositional bias: polar residues; sequence APSSGVKNGDKSAT. Residue S175 is part of the active site.

The protein belongs to the methyltransferase superfamily. L-isoaspartyl/D-aspartyl protein methyltransferase family.

It localises to the cytoplasm. The catalysed reaction is [protein]-L-isoaspartate + S-adenosyl-L-methionine = [protein]-L-isoaspartate alpha-methyl ester + S-adenosyl-L-homocysteine. Its function is as follows. Catalyzes the methyl esterification of L-isoaspartyl residues in peptides and proteins that result from spontaneous decomposition of normal L-aspartyl and L-asparaginyl residues. It plays a role in the repair and/or degradation of damaged proteins. This is Protein-L-isoaspartate O-methyltransferase from Burkholderia thailandensis (strain ATCC 700388 / DSM 13276 / CCUG 48851 / CIP 106301 / E264).